Reading from the N-terminus, the 123-residue chain is Small ribosomal subunit protein uS13 (123 aa).

The segment at 95–123 (GLPVRGQKTKTNARTRKGPKRAISGKKNK) is disordered.

This sequence belongs to the universal ribosomal protein uS13 family. Part of the 30S ribosomal subunit. Forms a loose heterodimer with protein S19. Forms two bridges to the 50S subunit in the 70S ribosome.

Its function is as follows. Located at the top of the head of the 30S subunit, it contacts several helices of the 16S rRNA. In the 70S ribosome it contacts the 23S rRNA (bridge B1a) and protein L5 of the 50S subunit (bridge B1b), connecting the 2 subunits; these bridges are implicated in subunit movement. Contacts the tRNAs in the A and P-sites. The chain is Small ribosomal subunit protein uS13 from Clostridium novyi (strain NT).